The primary structure comprises 356 residues: 1-deoxy-D-xylulose 5-phosphate reductoisomerase (356 aa).

NADPH-binding residues include T7, G8, S9, I10, G31, N33, and N111. K112 lines the 1-deoxy-D-xylulose 5-phosphate pocket. Residue E113 participates in NADPH binding. D131 serves as a coordination point for Mn(2+). 4 residues coordinate 1-deoxy-D-xylulose 5-phosphate: S132, E133, S155, and H178. E133 is a binding site for Mn(2+). G184 lines the NADPH pocket. Residues S191, N196, K197, and E200 each contribute to the 1-deoxy-D-xylulose 5-phosphate site. E200 contacts Mn(2+).

This sequence belongs to the DXR family. Mg(2+) serves as cofactor. The cofactor is Mn(2+).

The enzyme catalyses 2-C-methyl-D-erythritol 4-phosphate + NADP(+) = 1-deoxy-D-xylulose 5-phosphate + NADPH + H(+). The protein operates within isoprenoid biosynthesis; isopentenyl diphosphate biosynthesis via DXP pathway; isopentenyl diphosphate from 1-deoxy-D-xylulose 5-phosphate: step 1/6. In terms of biological role, catalyzes the NADPH-dependent rearrangement and reduction of 1-deoxy-D-xylulose-5-phosphate (DXP) to 2-C-methyl-D-erythritol 4-phosphate (MEP). The polypeptide is 1-deoxy-D-xylulose 5-phosphate reductoisomerase (Campylobacter jejuni (strain RM1221)).